Reading from the N-terminus, the 117-residue chain is MALETVPKDLRHLRACLLCSLVKTIDQFEYDGCDNCDAYLQMKGNREMVYDCTSSSFDGINAMMSPEDSWVSKWQRVSNFKPGVYAVSVTGRLPQGIVRELKSRGVAYKSRDTAIKT.

An interaction with SUPT5H region spans residues methionine 1 to leucine 40. The C4-type zinc finger occupies cysteine 16–cysteine 36.

The protein belongs to the SPT4 family. In terms of assembly, interacts with SUPT5H to form DSIF. DSIF interacts with the positive transcription elongation factor b complex (P-TEFb complex), which is composed of CDK9 and cyclin-T (CCNT1 or CCNT2). DSIF interacts with RNA polymerase II, and this interaction is reduced by phosphorylation of the C-terminal domain (CTD) of POLR2A by P-TEFb. DSIF also interacts with the NELF complex, which is composed of WHSC2/NELFA, COBRA1/NELFB, TH1L/NELFD and RDBP/NELFE, and this interaction occurs following prior binding of DSIF to RNA polymerase II. DSIF also interacts with HRMT1L2/PRMT1, HTATSF1/TATSF1, RNGTT/CAP1A, SKB1/PRMT5, SUPT6H, and can interact with PIN1. In terms of processing, ubiquitinated by Ubr5 when not assembled in the DSIF complex, leading to its degradation: Ubr5 recognizes and binds a degron that is not accessible when Supt4h1b is part of the DSIF complex. In terms of tissue distribution, expressed in brain, heart and liver.

It is found in the nucleus. Functionally, component of the DRB sensitivity-inducing factor complex (DSIF complex), which regulates mRNA processing and transcription elongation by RNA polymerase II. DSIF positively regulates mRNA capping by stimulating the mRNA guanylyltransferase activity of RNGTT/CAP1A. DSIF also acts cooperatively with the negative elongation factor complex (NELF complex) to enhance transcriptional pausing at sites proximal to the promoter. Transcriptional pausing may facilitate the assembly of an elongation competent RNA polymerase II complex. DSIF and NELF promote pausing by inhibition of the transcription elongation factor TFIIS/S-II. TFIIS/S-II binds to RNA polymerase II at transcription pause sites and stimulates the weak intrinsic nuclease activity of the enzyme. Cleavage of blocked transcripts by RNA polymerase II promotes the resumption of transcription from the new 3' terminus and may allow repeated attempts at transcription through natural pause sites. In Mus musculus (Mouse), this protein is Transcription elongation factor SPT4-B (Supt4h1b).